We begin with the raw amino-acid sequence, 394 residues long: Phosphopentomutase (394 aa).

The Mn(2+) site is built by Asp14, Asp287, His292, Asp328, His329, and His340.

It belongs to the phosphopentomutase family. Requires Mn(2+) as cofactor.

The protein localises to the cytoplasm. It catalyses the reaction 2-deoxy-alpha-D-ribose 1-phosphate = 2-deoxy-D-ribose 5-phosphate. The catalysed reaction is alpha-D-ribose 1-phosphate = D-ribose 5-phosphate. Its pathway is carbohydrate degradation; 2-deoxy-D-ribose 1-phosphate degradation; D-glyceraldehyde 3-phosphate and acetaldehyde from 2-deoxy-alpha-D-ribose 1-phosphate: step 1/2. Functionally, isomerase that catalyzes the conversion of deoxy-ribose 1-phosphate (dRib-1-P) and ribose 1-phosphate (Rib-1-P) to deoxy-ribose 5-phosphate (dRib-5-P) and ribose 5-phosphate (Rib-5-P), respectively. This chain is Phosphopentomutase, found in Listeria monocytogenes serotype 4a (strain HCC23).